We begin with the raw amino-acid sequence, 313 residues long: Zinc transporter ZitB (313 aa).

Over 1–20 (MAHSHSHTSSHLPEDNNARR) the chain is Cytoplasmic. The chain crosses the membrane as a helical span at residues 21–41 (LLYAFGVTAGFMLVEVVGGFL). The Periplasmic portion of the chain corresponds to 42-47 (SGSLAL). A helical transmembrane segment spans residues 48–68 (LADAGHMLTDTAALLFALLAV). Topologically, residues 69 to 89 (QFSRRPPTIRHTFGWLRLTTL) are cytoplasmic. A helical transmembrane segment spans residues 90-110 (AAFVNAIALVVITILIVWEAI). Residues 111–121 (ERFRTPRPVEG) are Periplasmic-facing. The chain crosses the membrane as a helical span at residues 122–142 (GMMMAIAVAGLLANILSFWLL). The Cytoplasmic segment spans residues 143 to 159 (HHGSEEKNLNVRAAALH). A helical membrane pass occupies residues 160 to 180 (VLGDLLGSVGAIIAALIIIWT). A topological domain (periplasmic) is located at residue G181. A helical membrane pass occupies residues 182–202 (WTPADPILSILVSLLVLRSAW). Over 203 to 313 (RLLKDSVNEL…GVSGHSHHHH (111 aa)) the chain is Cytoplasmic.

Belongs to the cation diffusion facilitator (CDF) transporter (TC 2.A.4) family. SLC30A subfamily.

The protein localises to the cell inner membrane. Involved in zinc efflux across the cytoplasmic membrane, thus reducing zinc accumulation in the cytoplasm and rendering bacteria more resistant to zinc. It may contribute to zinc homeostasis at low concentrations of zinc. The sequence is that of Zinc transporter ZitB (zitB) from Shigella flexneri.